A 505-amino-acid chain; its full sequence is 4-alpha-glucanotransferase (505 aa).

This sequence belongs to the disproportionating enzyme family.

Its subcellular location is the cytoplasm. The catalysed reaction is Transfers a segment of a (1-&gt;4)-alpha-D-glucan to a new position in an acceptor, which may be glucose or a (1-&gt;4)-alpha-D-glucan.. This chain is 4-alpha-glucanotransferase (malQ), found in Synechocystis sp. (strain ATCC 27184 / PCC 6803 / Kazusa).